Reading from the N-terminus, the 252-residue chain is Tabtoxin biosynthesis enzyme (252 aa).

Residues 1–23 form a disordered region; sequence MYQRTATQLARKPASKQGETEMN.

In terms of biological role, may play a role in tabtoxin biosynthesis. The chain is Tabtoxin biosynthesis enzyme (tblA) from Pseudomonas amygdali pv. tabaci (Pseudomonas syringae pv. tabaci).